Consider the following 196-residue polypeptide: Probable histone chaperone ASF1A (196 aa).

The segment covering Val-146–Glu-157 has biased composition (basic and acidic residues). The interval Val-146–Ser-196 is disordered.

It belongs to the ASF1 family. In terms of assembly, interacts with histone H3 and histone H4. Component of the HIRA complex made of UBN1, UBN2, ASF1A, CABIN1 and HIRA. Interacts with HIRA. In terms of tissue distribution, expressed in leaves and flower buds.

The protein localises to the nucleus. Its subcellular location is the nucleolus. Functionally, histone chaperone that facilitates histone deposition and histone exchange and removal during nucleosome assembly and disassembly. While encoded by a region of the Arabidopsis thaliana genome that is homologous to the Brassica S-locus for self incompatibility, this protein may not play the same role in Arabidopsis thaliana. The polypeptide is Probable histone chaperone ASF1A (ASF1A) (Arabidopsis thaliana (Mouse-ear cress)).